The primary structure comprises 184 residues: Large ribosomal subunit protein uL15 (184 aa).

A disordered region spans residues 1–50 (MDLSSLRPAKGAVKNKKRVGRGQGSGNGTTAGKGNKGQQARSGYKRPINE). The segment covering 21-35 (RGQGSGNGTTAGKGN) has biased composition (gly residues).

The protein belongs to the universal ribosomal protein uL15 family. As to quaternary structure, part of the 50S ribosomal subunit.

Binds to the 23S rRNA. This is Large ribosomal subunit protein uL15 from Chlorobium luteolum (strain DSM 273 / BCRC 81028 / 2530) (Pelodictyon luteolum).